The primary structure comprises 1857 residues: Chitin synthase Y (1857 aa).

The disordered stretch occupies residues M1–P22. One can recognise a Myosin motor domain in the interval M1–E788. Residue G102 to T109 coordinates ATP. A disordered region spans residues S601–S653. The N-linked (GlcNAc...) asparagine glycan is linked to N634. The tract at residues L668–D692 is actin-binding. 2 consecutive transmembrane segments (helical) span residues W898–G918 and L937–V957. Residues Q961 to F1020 form the Cytochrome b5 heme-binding domain. Residues N1047 and N1072 are each glycosylated (N-linked (GlcNAc...) asparagine). Residues F1209–L1229 traverse the membrane as a helical segment. An N-linked (GlcNAc...) asparagine glycan is attached at N1572. The next 3 helical transmembrane spans lie at L1603–L1623, I1630–I1650, and M1657–F1677. One can recognise a DEK-C domain in the interval L1799–S1854.

It in the N-terminal section; belongs to the TRAFAC class myosin-kinesin ATPase superfamily. Myosin family. In the C-terminal section; belongs to the chitin synthase family. Class V subfamily.

The protein resides in the cell membrane. It is found in the cell septum. The protein localises to the cell tip. The catalysed reaction is [(1-&gt;4)-N-acetyl-beta-D-glucosaminyl](n) + UDP-N-acetyl-alpha-D-glucosamine = [(1-&gt;4)-N-acetyl-beta-D-glucosaminyl](n+1) + UDP + H(+). Polymerizes chitin, a structural polymer of the cell wall and septum, by transferring the sugar moiety of UDP-GlcNAc to the non-reducing end of the growing chitin polymer. Specifically involved in hyphal elongation and new cell wall formation. This is Chitin synthase Y from Aspergillus oryzae (strain ATCC 42149 / RIB 40) (Yellow koji mold).